The chain runs to 67 residues: Small ribosomal subunit protein bS21 (67 aa).

This sequence belongs to the bacterial ribosomal protein bS21 family.

The chain is Small ribosomal subunit protein bS21 from Hydrogenobaculum sp. (strain Y04AAS1).